Here is a 478-residue protein sequence, read N- to C-terminus: MTKKRKLEGEESNEAEEPSQKLKQTPEEEQQLVIKNQDNQGDVEEVEYEEVEEEQEEEVEDDDDEDDGDENEDQTDGNRIEAAATSGSGNQEDDDDEPIQDLLEPFSKEQVLSLLKEAAEKHVDVANRIREVADEDPVHRKIFVHGLGWDTKTETLIEAFKQYGEIEDCKAVFDKISGKSKGYGFILYKSRSGARNALKQPQKKIGSRMTACQLASKGPVFGGAPIAAAAVSAPAQHSNSEHTQKKIYVSNVGAELDPQKLLMFFSKFGEIEEGPLGLDKYTGRPKGFCLFVYKSSESAKRALEEPHKTFEGHILHCQKAIDGPKPGKQQQHHHNPHAYNNPRYQRNDNNGYGPPGGHGHLMAGNPAGMGGPTAQVINPAIGQALTALLASQGAGLAFNPAIGQALLGSLGTAAGVNPGNGVGMPTGYGTQAMAPGTMPGYGTQPGLQGGYQTPQPGQGGTSRGQHGVGPYGTPYMGH.

The tract at residues 1 to 99 (MTKKRKLEGE…NQEDDDDEPI (99 aa)) is disordered. A compositionally biased stretch (acidic residues) spans 41–75 (GDVEEVEYEEVEEEQEEEVEDDDDEDDGDENEDQT). 2 RRM domains span residues 140-217 (RKIF…LASK) and 245-328 (KKIY…KPGK). Disordered regions lie at residues 321–359 (IDGP…GGHG) and 442–478 (GTQP…YMGH). The segment covering 442-456 (GTQPGLQGGYQTPQP) has biased composition (low complexity). Residues 457-470 (GQGGTSRGQHGVGP) show a composition bias toward gly residues.

In terms of assembly, interacts with UBA1A, UBA2A, UBP1A, UBP1B, UBP1C and SRK2E. Expressed in young leaves, flowers and embryos.

It is found in the nucleus. Its function is as follows. Heterogeneous nuclear ribonucleoprotein (hnRNP)-like protein that acts as a component of a complex regulating the turnover of mRNAs in the nucleus. Binds with high affinity to RNA molecules that contain U-rich sequences in 3'-UTRs. May function in complex with UBP1 and contribute to the stabilization of mRNAs in the nucleus. However, unlike UBP1, UBA2A does not stimulate pre-mRNA splicing. The sequence is that of UBP1-associated protein 2A (UBA2A) from Arabidopsis thaliana (Mouse-ear cress).